A 307-amino-acid polypeptide reads, in one-letter code: UDP-3-O-acyl-N-acetylglucosamine deacetylase (307 aa).

Residues H79, H239, and D243 each coordinate Zn(2+). The active-site Proton donor is the H266.

It belongs to the LpxC family. Zn(2+) serves as cofactor.

It carries out the reaction a UDP-3-O-[(3R)-3-hydroxyacyl]-N-acetyl-alpha-D-glucosamine + H2O = a UDP-3-O-[(3R)-3-hydroxyacyl]-alpha-D-glucosamine + acetate. The protein operates within glycolipid biosynthesis; lipid IV(A) biosynthesis; lipid IV(A) from (3R)-3-hydroxytetradecanoyl-[acyl-carrier-protein] and UDP-N-acetyl-alpha-D-glucosamine: step 2/6. Its function is as follows. Catalyzes the hydrolysis of UDP-3-O-myristoyl-N-acetylglucosamine to form UDP-3-O-myristoylglucosamine and acetate, the committed step in lipid A biosynthesis. The polypeptide is UDP-3-O-acyl-N-acetylglucosamine deacetylase (Tolumonas auensis (strain DSM 9187 / NBRC 110442 / TA 4)).